A 428-amino-acid chain; its full sequence is Proteinase-activated receptor 1 (428 aa).

The N-terminal stretch at 1–21 (MGPQRLLLVAAGLSLCGPLLS) is a signal peptide. Positions 22–41 (SRVPVRQPESEMTDATVNPR) are cleaved as a propeptide — removed for receptor activation. Residues 42–105 (SFFLRNPGEN…SGYLTSPWLR (64 aa)) are Extracellular-facing. Asn65 and Asn78 each carry an N-linked (GlcNAc...) asparagine glycan. The helical transmembrane segment at 106–131 (LFIPSVYTFVFVVSLPLNILAIAVFV) threads the bilayer. Residues 132–140 (LKMKVKKPA) lie on the Cytoplasmic side of the membrane. The helical transmembrane segment at 141–160 (VVYMLHLAMADVLFVSVLPL) threads the bilayer. The Extracellular portion of the chain corresponds to 161-179 (KISYYFSGSDWQFGSGMCR). A disulfide bond links Cys178 and Cys257. A helical transmembrane segment spans residues 180-201 (FATAAFYCNMYASIMLMTVISI). Residues 202 to 221 (DRFLAVVYPIQSLSWRTLGR) are Cytoplasmic-facing. Residues 222–242 (ANFTCLVIWVMAIMGVVPLLL) traverse the membrane as a helical segment. Residues 243-271 (KEQTTRVPGLNITTCHDVLNETLLQGFYS) are Extracellular-facing. N-linked (GlcNAc...) asparagine glycosylation is found at Asn253 and Asn262. Residues 272 to 291 (YYFSAFSAVFFLVPLIISTI) form a helical membrane-spanning segment. Topologically, residues 292-314 (CYMSIIRCLSSSSVANRSKKSRA) are cytoplasmic. The chain crosses the membrane as a helical span at residues 315-337 (LFLSAAVFCVFIVCFGPTNVLLI). The Extracellular portion of the chain corresponds to 338–352 (MHYLLLSDSPATEKA). The chain crosses the membrane as a helical span at residues 353–377 (YFAYLLCVCVSSVSCCIDPLIYYYA). The Cytoplasmic portion of the chain corresponds to 378 to 428 (SSECQRHLYGILCCKESSDPNSYNSTGQLMPSKMDTCSSHLNNSIYKKLLA). Ser421 is modified (phosphoserine).

This sequence belongs to the G-protein coupled receptor 1 family. In terms of processing, proteolytic cleavage by thrombin generates a new N-terminus that functions as a tethered ligand. Also proteolytically cleaved by cathepsin CTSG. Post-translationally, phosphorylated in the C-terminal tail; probably mediating desensitization prior to the uncoupling and internalization of the receptor.

The protein resides in the cell membrane. High affinity receptor that binds the activated thrombin, leading to calcium release from intracellular stores. The thrombin-activated receptor signaling pathway is mediated through PTX-insensitive G proteins, activation of phospholipase C resulting in the production of 1D-myo-inositol 1,4,5-trisphosphate (InsP3) which binds to InsP3 receptors causing calcium release from the stores. In astrocytes, the calcium released into the cytosol allows the Ca(2+)-dependent release of L-glutamate into the synaptic cleft through BEST1, that targets the neuronal postsynaptic GRIN2A/NMDAR receptor resulting in the synaptic plasticity regulation. May play a role in platelets activation and in vascular development. Mediates up-regulation of pro-inflammatory cytokines, such as MCP-1/CCL2 and IL6, triggered by coagulation factor Xa (F10) in cardiac fibroblasts and umbilical vein endothelial cells. The chain is Proteinase-activated receptor 1 from Cricetulus longicaudatus (Long-tailed dwarf hamster).